The primary structure comprises 431 residues: Cyclic 2,3-diphosphoglycerate synthetase (431 aa).

Belongs to the cyclic 2,3-diphosphoglycerate synthetase family.

Its subcellular location is the cytoplasm. It catalyses the reaction (2R)-2,3-bisphosphoglycerate + ATP + H(+) = cyclic (2R)-2,3-bisphosphoglycerate + ADP + phosphate. Catalyzes the formation of cyclic 2,3-diphosphoglycerate (cDPG) by formation of an intramolecular phosphoanhydride bond at the expense of ATP. The chain is Cyclic 2,3-diphosphoglycerate synthetase from Pyrococcus furiosus (strain ATCC 43587 / DSM 3638 / JCM 8422 / Vc1).